Here is a 317-residue protein sequence, read N- to C-terminus: Protein phosphatase 1 regulatory subunit 3C (317 aa).

Positions 84-87 (RVVF) match the PP1-binding motif motif. Positions 141–263 (PSSDYLSFRD…YRIVHVQWKP (123 aa)) are interaction with EPM2A. The 109-residue stretch at 149–257 (RDRFQKNFVC…NNEAQNYRIV (109 aa)) folds into the CBM21 domain.

Interacts with PPP1CC catalytic subunit of PP1 and associates with glycogen. Forms complexes with glycogen phosphorylase, glycogen synthase and phosphorylase kinase which is necessary for its regulation of PP1 activity. Also interacts with EPM2A/laforin. Ubiquitinated by NHLRC1/malin in a EPM2A/laforin-dependent manner.

Its function is as follows. Acts as a glycogen-targeting subunit for PP1 and regulates its activity. Activates glycogen synthase, reduces glycogen phosphorylase activity and limits glycogen breakdown. Dramatically increases basal and insulin-stimulated glycogen synthesis upon overexpression in a variety of cell types. The sequence is that of Protein phosphatase 1 regulatory subunit 3C from Rattus norvegicus (Rat).